Reading from the N-terminus, the 331-residue chain is ADP-L-glycero-D-manno-heptose-6-epimerase (331 aa).

NADP(+) is bound by residues 11 to 12, 32 to 33, Lys-39, Lys-54, 75 to 79, and Asn-92; these read FI, DN, and EGACS. Tyr-139 (proton acceptor) is an active-site residue. Lys-143 serves as a coordination point for NADP(+). Asn-168 lines the substrate pocket. Residues Val-169 and Lys-177 each coordinate NADP(+). Lys-177 serves as the catalytic Proton acceptor. Substrate contacts are provided by residues Arg-179, His-186, 200 to 203, Arg-213, and Tyr-292; that span reads FGEY.

Belongs to the NAD(P)-dependent epimerase/dehydratase family. HldD subfamily. Homopentamer. It depends on NADP(+) as a cofactor.

It catalyses the reaction ADP-D-glycero-beta-D-manno-heptose = ADP-L-glycero-beta-D-manno-heptose. Its pathway is nucleotide-sugar biosynthesis; ADP-L-glycero-beta-D-manno-heptose biosynthesis; ADP-L-glycero-beta-D-manno-heptose from D-glycero-beta-D-manno-heptose 7-phosphate: step 4/4. Catalyzes the interconversion between ADP-D-glycero-beta-D-manno-heptose and ADP-L-glycero-beta-D-manno-heptose via an epimerization at carbon 6 of the heptose. The chain is ADP-L-glycero-D-manno-heptose-6-epimerase from Cupriavidus taiwanensis (strain DSM 17343 / BCRC 17206 / CCUG 44338 / CIP 107171 / LMG 19424 / R1) (Ralstonia taiwanensis (strain LMG 19424)).